The chain runs to 86 residues: Myosuppressin (86 aa).

The N-terminal stretch at 1–18 (MAIFCNNVLAALPTQCNP) is a signal peptide. Residues 19 to 70 (GFLDDLPPRIRKVCVALSRIYELGSEMESYIGDKENHITGFHESIPLLDSGV) constitute a propeptide that is removed on maturation. Glutamine 73 carries the pyrrolidone carboxylic acid modification. At phenylalanine 82 the chain carries Phenylalanine amide.

The protein localises to the secreted. Its function is as follows. Myoinhibiting neuropeptide. This is Myosuppressin from Apis mellifera (Honeybee).